Here is a 158-residue protein sequence, read N- to C-terminus: Snaclec agglucetin subunit alpha-2 (158 aa).

The signal sequence occupies residues 1–23; it reads MGRFIFVSFGLLVVFLSLSGTGA. Cystine bridges form between cysteine 27–cysteine 38, cysteine 55–cysteine 152, and cysteine 127–cysteine 144. Residues 34–153 enclose the C-type lectin domain; sequence YDQYCYQVIK…CIQLNPFVCK (120 aa).

This sequence belongs to the snaclec family. Heterotetramer of the subunits alpha-1, alpha-2, beta-1 and beta-2; disulfide-linked. As to expression, expressed by the venom gland.

It localises to the secreted. Functionally, agglucetin specifically causes platelet aggregation and surface exposure of integrin alpha-IIb/beta-3 with a GPIb-(GP1BA-) dependent manner in washed platelets. It binds to human platelets in a saturable manner, and its binding is specifically blocked by anti-GP Ib mAb. It regulates endothelial cell survival and promotes angiogenesis by activating integrin alpha-v/beta-3 signaling through FAK/phosphatidylinositol 3-kinase (PI3K)/Akt pathway. The polypeptide is Snaclec agglucetin subunit alpha-2 (Deinagkistrodon acutus (Hundred-pace snake)).